A 732-amino-acid polypeptide reads, in one-letter code: MSPSGPNLNNKEHNRASEKKNSRTHNKKTNRNQSKEKPVSSRSVETPKNAVCLEPVGTDPVSNVATVDASKEEQDEDEQICFICAEGITYSCVLPCNHRMCHVCALRLRALYKTKECTFCKTEWDTVLITKDHEIDIHDVDLAKLPFQDEKLGIVYSDEHAQEESNLLLQFNCPEDACDITCKGWFDLKLHAKVKHHKFFCDLCVKNKKVFTHEHTLFSKKGLTKHNEVGDQGSDLEITGFKGHPKCEFCNTHFYDDDELFKHCREKHERCYICDQVAGRPTHQYFKNYDSLERHFEKDHYICRERECLERKFVVFGTEIDLKAHQLDEHPHNFTQRELREARRIIPQFSYDPPGASGRNRRERTSSTPSEQSTSVNETANSLSNLHLSRGEIAHLRQEEYVREQQARHRDFGFTLSNPAPTSARPATSTRTISRGKTRTLRNEDFPSLAEVANQNSSSAPSVPVSAPRLSGKSASRNHVPSPPKGTKSPMASSEQAQHQQVIDRMQKLTNYDDHKINDFKFAVSSFRGNVMPAREAVARITKLVAKPHEQLSGVFNQIANLLENKEKSRELLEAWQEWKILNAKDDTRIGTTNSNLLRLKRSNRTAAQTASVWNRIERAAAHDGPSLSAPSSSINLANITSRPTNSSAANTPSWGVRKARASALNARSEEDFPALPPSTSKRISVQLGKKQARPVDSWGSTPNTSSNRNSNTMGVSKKKNGKKQTVLFHIG.

The tract at residues 1–48 (MSPSGPNLNNKEHNRASEKKNSRTHNKKTNRNQSKEKPVSSRSVETPK) is disordered. The span at 10-21 (NKEHNRASEKKN) shows a compositional bias: basic and acidic residues. The RING-type zinc-finger motif lies at 81–121 (CFICAEGITYSCVLPCNHRMCHVCALRLRALYKTKECTFCK). The LIM zinc-binding domain occupies 245–315 (PKCEFCNTHF…RECLERKFVV (71 aa)). Disordered stretches follow at residues 345-380 (IIPQ…NETA), 411-501 (DFGF…QHQQ), and 623-732 (HDGP…FHIG). Polar residues-rich tracts occupy residues 366 to 380 (SSTP…NETA) and 415 to 433 (TLSN…TRTI). Low complexity predominate over residues 457–468 (SSSAPSVPVSAP). Phosphoserine is present on serine 482. Polar residues-rich tracts occupy residues 490-501 (PMASSEQAQHQQ) and 629-654 (SAPS…NTPS). Positions 701–713 (STPNTSSNRNSNT) are enriched in low complexity.

It belongs to the ZNF598/HEL2 family.

The protein localises to the cytoplasm. It catalyses the reaction S-ubiquitinyl-[E2 ubiquitin-conjugating enzyme]-L-cysteine + [acceptor protein]-L-lysine = [E2 ubiquitin-conjugating enzyme]-L-cysteine + N(6)-ubiquitinyl-[acceptor protein]-L-lysine.. The protein operates within protein modification; protein ubiquitination. Functionally, E3 ubiquitin-protein ligase that plays a key role in the ribosome quality control (RQC), a pathway that takes place when a ribosome has stalled during translation, leading to degradation of nascent peptide chains. Activated when ribosomes are stalled within an mRNA following translation of prematurely polyadenylated mRNAs. Acts as a ribosome collision sensor: specifically recognizes and binds collided ribosome and ubiquitinates the 40S ribosomal proteins rps20/uS10 and rps3/uS3. Catalyzes 'Lys-63'-linked polyubiquitination of rps20/uS10, promoting recruitment of the RQT (ribosome quality control trigger) complex, which drives the disassembly of stalled ribosomes, followed by degradation of nascent peptides. This chain is E3 ubiquitin-protein ligase hel2, found in Schizosaccharomyces pombe (strain 972 / ATCC 24843) (Fission yeast).